The sequence spans 431 residues: Levansucrase LscB (431 aa).

The sucrose site is built by tryptophan 61, aspartate 62, alanine 148, arginine 218, and aspartate 219. Aspartate 62 acts as the Nucleophile in catalysis. Glutamate 303 acts as the Proton donor/acceptor in catalysis.

This sequence belongs to the glycosyl hydrolase 68 family.

It localises to the secreted. The enzyme catalyses [6)-beta-D-fructofuranosyl-(2-&gt;](n) alpha-D-glucopyranoside + sucrose = [6)-beta-D-fructofuranosyl-(2-&gt;](n+1) alpha-D-glucopyranoside + D-glucose. Catalyzes the synthesis of levan, a fructose polymer, by transferring the fructosyl moiety from sucrose to a growing acceptor molecule. In Pseudomonas savastanoi pv. glycinea (Pseudomonas syringae pv. glycinea), this protein is Levansucrase LscB.